Reading from the N-terminus, the 445-residue chain is Tryptamine benzoyltransferase 1 (445 aa).

Residues H150 and D382 each act as proton acceptor in the active site.

Belongs to the plant acyltransferase family.

Functionally, hydroxycinnamoyl transferase that catalyzes the transfer of an acyl from benzoyl-CoA to tryptamine, to produce benzoyl tryptamine. Serotonin and tyramine serve as acyl acceptors in vitro. Can use p-coumaroyl-CoA, and to a lesser extent caffeoyl-CoA, as acyl donors. In Oryza sativa subsp. japonica (Rice), this protein is Tryptamine benzoyltransferase 1.